The primary structure comprises 72 residues: Dermaseptin AA-3-4 (72 aa).

A signal peptide spans 1–22 (MAFLKKSLFLVLFLGLVSLSIC). Residues 23 to 43 (DEEKRENEDEEEQEDDEQSEE) constitute a propeptide that is removed on maturation. The tract at residues 24-45 (EEKRENEDEEEQEDDEQSEEKR) is disordered. A compositionally biased stretch (acidic residues) spans 30 to 41 (EDEEEQEDDEQS).

It belongs to the frog skin active peptide (FSAP) family. As to expression, expressed by the skin glands.

The protein localises to the secreted. Functionally, possesses a potent antimicrobial activity against Gram-positive and Gram-negative bacteria. Probably acts by disturbing membrane functions with its amphipathic structure. This Agalychnis annae (Blue-sided leaf frog) protein is Dermaseptin AA-3-4.